A 1477-amino-acid polypeptide reads, in one-letter code: MRARRQENSISTPSAPSTSTSPRKKASIGNSRSKNHGSKMEMYDQFYKKFVRPPMAPIYYPTEEEFSDPIEYVAKIRHEAEKFGVVKIVPPANFKPPFAIDKEAFTFRPRTQKLNEVEAIVKEKHTFIDRLINFNRYSGLTFEFPVDRDGNIVDLYRLHRIVQNFGGCEEVNEDEKWRDVAREYLPKEQMARGVPSAFINLIRSHYNLHIEPFNRNLKEKAMKNDDESDDEMEELKHKYQHHHGTMRTEIEVPNDKTTEGGEDECPVSMQSGRRRSKNKKASSSRKTLGTSSKKNSTRGRKNKKKAEGDDDDDEDPMDQVFCVACNEGKDEDLLLLCDIDGCNNGRHTYCCDPVLDEVPEGEWRCPKCIESEDAKIGLDWGFYDADTEYNLNSFTEFANKWKCDYFGVKDVSQVSCDAVERSFWKNVISHENPVSVKYGADLITSRVGSGFPRKEDKHTGPDLKLKQQYASHAWNLNNMPVLRESVLSHFNTGISGMMVPWVYVGMCFSTFCWHTEDHWTYSVNYNHFGERKIWYGVGGEDAEKFEDALKKIAPGLTGRQRDLFHHMTTAANPHLLRSLGVPIHSVHQNAGEFVITFPRAYHAGFNEGLNFAEAVNFAPIDWLSKGRECVESYSNVRRYLVFSHDELLFKMVEAMDKLGISMSLATHEELIRIYEKQKMLRELLARLGVSNRQMQQVMFEKIPDEQRSCRFCKTTLFMCALVCNKHKKMTCVEHHDHLCNSCTTKDYRYQYRFELDQLNNMCDELGKRTVNYNGWKEESDEMLEEEGKPKLERIEEFIDSAKQNKYPQTDQVHKLITIRHTAKSAIEKANQLLFKKVRTRTKTRCQRADTRTDTEGVRSLIEQMQAMDCNLTVIIDKLEKWMEQVEMWRNRAKDAIYREQEYSKEEIEKIIEEGDEYDIKLEEIDELRKVIQMKDWSDRARKVTTWKATPDMEKDIDFEYKLRYASSDILSLIRDSPRNPTDGTSKLVFELQQMLRDANTLEVIANNFCENPALDQLQSIWQSLRETDWFYEKYINMVRYEIIHVAKIKSMIDAAIPVLSEFDLKTQLQKIVNVEITLSKAAEISKAFETSKCLNGSEEHLGILDMISTMNAFTQRIAILFKPNNAYHNLFEILSERDDLTPLAEGQTIPLYFQGGAVHPSDEWHQMKEFESLDQIVHHQSSLREMQMRIFEKVKQANSARGLEACSCLGFNKSDDSESTLTCIMCDSEFHVRCCEWSPFLEKLPEGCFLCVRCLRGQRPVIDDVTTALNGTPSGCLETHLVRNLIQKTRGITQNLMEAANKRKSGESSDDICKIALFDWLSCEILNPNGLPKARELISEFYMEYLQKQSSAALELKNRPVRSKPSVSLFDPKITAKRKRPSVSHKETSKKSRKRQSQASPSEYYEDESEFKSCQARACLKPYGDSVNWVMCEAGCKNWFHVICLGFTLREINDMHEYRCSSCLDHADSPTSSVSTD.

The segment at 1-37 (MRARRQENSISTPSAPSTSTSPRKKASIGNSRSKNHG) is disordered. Over residues 9-21 (SISTPSAPSTSTS) the composition is skewed to low complexity. The JmjN domain occupies 56-97 (APIYYPTEEEFSDPIEYVAKIRHEAEKFGVVKIVPPANFKPP). In terms of domain architecture, ARID spans 121–218 (VKEKHTFIDR…HIEPFNRNLK (98 aa)). The interval 222 to 314 (MKNDDESDDE…KAEGDDDDDE (93 aa)) is disordered. The segment covering 246–259 (MRTEIEVPNDKTTE) has biased composition (basic and acidic residues). Composition is skewed to basic residues over residues 272–283 (GRRRSKNKKASS) and 295–304 (NSTRGRKNKK). The PHD-type 1 zinc finger occupies 319–371 (QVFCVACNEGKDEDLLLLCDIDGCNNGRHTYCCDPVLDEVPEGEWRCPKCIES). Residues 468-634 (QYASHAWNLN…KGRECVESYS (167 aa)) form the JmjC domain. The Fe cation site is built by His-514, Asp-517, and His-602. A coiled-coil region spans residues 874–926 (IIDKLEKWMEQVEMWRNRAKDAIYREQEYSKEEIEKIIEEGDEYDIKLEEIDE). The PHD-type 2 zinc finger occupies 1203–1257 (LEACSCLGFNKSDDSESTLTCIMCDSEFHVRCCEWSPFLEKLPEGCFLCVRCLRG). A disordered region spans residues 1375–1404 (TAKRKRPSVSHKETSKKSRKRQSQASPSEY). Residues 1411–1466 (FKSCQARACLKPYGDSVNWVMCEAGCKNWFHVICLGFTLREINDMHEYRCSSCLDH) form a PHD-type 3 zinc finger.

This sequence belongs to the JARID1 histone demethylase family. The cofactor is Fe(2+).

It localises to the nucleus. It catalyses the reaction N(6),N(6),N(6)-trimethyl-L-lysyl(4)-[histone H3] + 3 2-oxoglutarate + 3 O2 = L-lysyl(4)-[histone H3] + 3 formaldehyde + 3 succinate + 3 CO2. Histone demethylase that specifically demethylates 'Lys-4' of histone H3, thereby playing a central role in histone code. Does not demethylate histone H3 'Lys-9', H3 'Lys-27', H3 'Lys-36', H3 'Lys-79' or H4 'Lys-20'. Demethylates trimethylated and dimethylated but not monomethylated H3 'Lys-4'. Required for normal longevity of the soma in a germline-dependent manner. Implicated in the epigenetic inheritance of lifespan over several generations. Involved in larval development and vulva formation. The polypeptide is Lysine-specific demethylase rbr-2 (rbr-2) (Caenorhabditis elegans).